The primary structure comprises 472 residues: 3-isopropylmalate dehydratase large subunit (472 aa).

Residues Cys347, Cys409, and Cys412 each coordinate [4Fe-4S] cluster.

It belongs to the aconitase/IPM isomerase family. LeuC type 1 subfamily. Heterodimer of LeuC and LeuD. [4Fe-4S] cluster serves as cofactor.

The enzyme catalyses (2R,3S)-3-isopropylmalate = (2S)-2-isopropylmalate. The protein operates within amino-acid biosynthesis; L-leucine biosynthesis; L-leucine from 3-methyl-2-oxobutanoate: step 2/4. Catalyzes the isomerization between 2-isopropylmalate and 3-isopropylmalate, via the formation of 2-isopropylmaleate. The chain is 3-isopropylmalate dehydratase large subunit from Salinibacter ruber (strain DSM 13855 / M31).